A 104-amino-acid polypeptide reads, in one-letter code: L-rhamnose mutarotase (104 aa).

Position 18 (Tyr18) interacts with substrate. His22 serves as the catalytic Proton donor. Substrate contacts are provided by residues Tyr41 and 76–77; that span reads WW.

This sequence belongs to the rhamnose mutarotase family. As to quaternary structure, homodimer.

The protein localises to the cytoplasm. It carries out the reaction alpha-L-rhamnose = beta-L-rhamnose. It functions in the pathway carbohydrate metabolism; L-rhamnose metabolism. Functionally, involved in the anomeric conversion of L-rhamnose. The chain is L-rhamnose mutarotase from Sinorhizobium medicae (strain WSM419) (Ensifer medicae).